Here is a 111-residue protein sequence, read N- to C-terminus: Cyanovirin-N homolog (111 aa).

Belongs to the cyanovirin-N family.

In terms of biological role, mannose-binding lectin. The protein is Cyanovirin-N homolog of Neurospora crassa (strain ATCC 24698 / 74-OR23-1A / CBS 708.71 / DSM 1257 / FGSC 987).